The primary structure comprises 347 residues: Dolichyl-diphosphooligosaccharide--protein glycosyltransferase subunit TUSC3 (347 aa).

An N-terminal signal peptide occupies residues 1–41; that stretch reads MGARGAPSRRRQAGRRPRYLPTGSFPFLLLLLLLCIQLGGG. Over 42–196 the chain is Lumenal; sequence QKKKENLLAE…DVHIRVFRPP (155 aa). The Thioredoxin domain occupies 59–187; the sequence is WSSRRSVFRM…LAKWIADRTD (129 aa). The N-linked (GlcNAc...) asparagine glycan is linked to Asn83. An intrachain disulfide couples Cys99 to Cys102. A helical membrane pass occupies residues 197–217; it reads NYSGTIALALLVSLVGGLLYL. The Cytoplasmic portion of the chain corresponds to 218–221; that stretch reads RRNN. Residues 222–242 traverse the membrane as a helical segment; the sequence is LEFIYNKTGWAMVSLCIVFAM. Residues 243–276 are Lumenal-facing; it reads TSGQMWNHIRGPPYAHKNPHNGQVSYIHGSSQVQ. Residues 277–297 form a helical membrane-spanning segment; that stretch reads FVAESHIILVLNAAITMGMDL. The Cytoplasmic portion of the chain corresponds to 298–312; sequence LNEAATSKGDVGKRR. A helical membrane pass occupies residues 313–333; sequence IICLVGLGLVVFFFSFLLSIF. Topologically, residues 334-347 are lumenal; the sequence is RSKYHGYPYSFLIK.

It belongs to the OST3/OST6 family. Accessory component of the STT3B-containing form of the oligosaccharyltransferase (OST) complex. OST exists in two different complex forms which contain common core subunits RPN1, RPN2, OST48, OST4, DAD1 and TMEM258, either STT3A or STT3B as catalytic subunits, and form-specific accessory subunits. OST can form stable complexes with the Sec61 complex or with both the Sec61 and TRAP complexes. The association of TUSC3 or MAGT1 with the STT3B-containing complex seems to be mutually exclusvice.

It localises to the endoplasmic reticulum membrane. Its pathway is protein modification; protein glycosylation. In terms of biological role, acts as accessory component of the N-oligosaccharyl transferase (OST) complex which catalyzes the transfer of a high mannose oligosaccharide from a lipid-linked oligosaccharide donor to an asparagine residue within an Asn-X-Ser/Thr consensus motif in nascent polypeptide chains. Involved in N-glycosylation of STT3B-dependent substrates. Specifically required for the glycosylation of a subset of acceptor sites that are near cysteine residues; in this function seems to act redundantly with MAGT1. In its oxidized form proposed to form transient mixed disulfides with a glycoprotein substrate to facilitate access of STT3B to the unmodified acceptor site. Also has oxidoreductase-independent functions in the STT3B-containing OST complex possibly involving substrate recognition. Could indirectly play a role in Mg(2+) transport. The protein is Dolichyl-diphosphooligosaccharide--protein glycosyltransferase subunit TUSC3 (TUSC3) of Bos taurus (Bovine).